We begin with the raw amino-acid sequence, 227 residues long: Lipoprotein-releasing system ATP-binding protein LolD (227 aa).

The 221-residue stretch at 7-227 folds into the ABC transporter domain; it reads LKLTGVERHY…TISDGKVVEF (221 aa). Residue 43-50 participates in ATP binding; it reads APSGTGKS.

Belongs to the ABC transporter superfamily. Lipoprotein translocase (TC 3.A.1.125) family. The complex is composed of two ATP-binding proteins (LolD) and two transmembrane proteins (LolC and LolE).

Its subcellular location is the cell inner membrane. Functionally, part of the ABC transporter complex LolCDE involved in the translocation of mature outer membrane-directed lipoproteins, from the inner membrane to the periplasmic chaperone, LolA. Responsible for the formation of the LolA-lipoprotein complex in an ATP-dependent manner. This chain is Lipoprotein-releasing system ATP-binding protein LolD, found in Rhizobium etli (strain ATCC 51251 / DSM 11541 / JCM 21823 / NBRC 15573 / CFN 42).